We begin with the raw amino-acid sequence, 421 residues long: NAD-specific glutamate dehydrogenase (421 aa).

Positions 70 and 94 each coordinate substrate. Lys106 (proton donor) is an active-site residue. The NAD(+) site is built by Thr191 and Asn222. Substrate is bound at residue Ser355.

It belongs to the Glu/Leu/Phe/Val dehydrogenases family. In terms of assembly, homohexamer.

The enzyme catalyses L-glutamate + NAD(+) + H2O = 2-oxoglutarate + NH4(+) + NADH + H(+). The protein operates within amino-acid degradation; L-glutamate degradation via hydroxyglutarate pathway; crotonoyl-CoA from L-glutamate: step 1/5. In Peptoniphilus asaccharolyticus (Peptostreptococcus asaccharolyticus), this protein is NAD-specific glutamate dehydrogenase.